A 260-amino-acid polypeptide reads, in one-letter code: Cell wall synthesis protein Wag31 (260 aa).

Residues 31-64 (FLDLVENELTRLIEENSDLRQRINELDQELAAGG) are a coiled coil. Phosphothreonine is present on threonine 73. The stretch at 161–196 (MLADAQSRSEAQLRQAQEKADALQADAERKHSEIMG) forms a coiled coil. The segment at 233-260 (ELGQRGSAAPVDSNADAGGFDQFNRGKN) is disordered.

Belongs to the DivIVA family. Forms homooligomers. Post-translationally, phosphorylated by PknA. Phosphorylation enhances polar localization, which in turn heightens polar peptidoglycan biosynthesis.

Its subcellular location is the cytoplasm. In terms of biological role, important for maintaining cell shape and cell wall integrity by localizing peptidoglycan synthesis to the cell poles. The protein is Cell wall synthesis protein Wag31 (wag31) of Mycobacterium tuberculosis (strain CDC 1551 / Oshkosh).